We begin with the raw amino-acid sequence, 447 residues long: Argininosuccinate synthase (447 aa).

Residues 12 to 20 (AYSGGLDTS) and Ala39 contribute to the ATP site. Residues Tyr92 and Ser97 each contribute to the L-citrulline site. Gly122 serves as a coordination point for ATP. Thr124, Asn128, and Asp129 together coordinate L-aspartate. Asn128 is an L-citrulline binding site. L-citrulline-binding residues include Arg132, Ser182, Ser191, Glu267, and Tyr279.

This sequence belongs to the argininosuccinate synthase family. Type 1 subfamily. In terms of assembly, homotetramer.

The protein localises to the cytoplasm. It carries out the reaction L-citrulline + L-aspartate + ATP = 2-(N(omega)-L-arginino)succinate + AMP + diphosphate + H(+). Its pathway is amino-acid biosynthesis; L-arginine biosynthesis; L-arginine from L-ornithine and carbamoyl phosphate: step 2/3. In Sulfurovum sp. (strain NBC37-1), this protein is Argininosuccinate synthase.